A 398-amino-acid chain; its full sequence is Vacuolar protease A (398 aa).

Positions 1-18 (MKSTSLLTASVLLGSASA) are cleaved as a signal peptide. Residues 19–70 (AVHKLKLNKVPLDEQLYTHNIDAHVRALGQKYMGIRPNVHQELLEENSLNDM) constitute a propeptide, activation peptide. Positions 85-395 (YFSEISLGTP…DLGNNAVGLA (311 aa)) constitute a Peptidase A1 domain. Asp-103 is a catalytic residue. Cys-116 and Cys-121 are oxidised to a cystine. A glycan (N-linked (GlcNAc...) asparagine) is linked at Asn-138. Asp-287 is a catalytic residue. Cys-321 and Cys-354 are oxidised to a cystine. An N-linked (GlcNAc...) asparagine glycan is attached at Asn-338.

Belongs to the peptidase A1 family.

The protein resides in the vacuole lumen. It is found in the secreted. It catalyses the reaction Hydrolysis of proteins with broad specificity for peptide bonds. Cleaves -Leu-Leu-|-Val-Tyr- bond in a synthetic substrate. Does not act on esters of Tyr or Arg.. Vacuolar aspartic endopeptidase which is probably also secreted and contributes to virulence. The sequence is that of Vacuolar protease A (pep2) from Aspergillus fumigatus (strain ATCC MYA-4609 / CBS 101355 / FGSC A1100 / Af293) (Neosartorya fumigata).